The following is a 344-amino-acid chain: Anthranilate phosphoribosyltransferase (344 aa).

Residues glycine 84, 87-88 (GD), threonine 92, 94-97 (NIST), 112-120 (KHGNRSVSS), and serine 124 contribute to the 5-phospho-alpha-D-ribose 1-diphosphate site. Position 84 (glycine 84) interacts with anthranilate. Serine 96 contacts Mg(2+). Asparagine 115 provides a ligand contact to anthranilate. Residue arginine 170 participates in anthranilate binding. Mg(2+)-binding residues include aspartate 229 and glutamate 230.

Belongs to the anthranilate phosphoribosyltransferase family. As to quaternary structure, homodimer. Requires Mg(2+) as cofactor.

It carries out the reaction N-(5-phospho-beta-D-ribosyl)anthranilate + diphosphate = 5-phospho-alpha-D-ribose 1-diphosphate + anthranilate. Its pathway is amino-acid biosynthesis; L-tryptophan biosynthesis; L-tryptophan from chorismate: step 2/5. In terms of biological role, catalyzes the transfer of the phosphoribosyl group of 5-phosphorylribose-1-pyrophosphate (PRPP) to anthranilate to yield N-(5'-phosphoribosyl)-anthranilate (PRA). The sequence is that of Anthranilate phosphoribosyltransferase from Xylella fastidiosa (strain M23).